A 238-amino-acid chain; its full sequence is Ribosomal RNA small subunit methyltransferase G (238 aa).

S-adenosyl-L-methionine-binding positions include glycine 78, 129–130, and arginine 148; that span reads AE.

The protein belongs to the methyltransferase superfamily. RNA methyltransferase RsmG family.

The protein resides in the cytoplasm. Its function is as follows. Specifically methylates the N7 position of a guanine in 16S rRNA. The sequence is that of Ribosomal RNA small subunit methyltransferase G from Caldicellulosiruptor bescii (strain ATCC BAA-1888 / DSM 6725 / KCTC 15123 / Z-1320) (Anaerocellum thermophilum).